Here is a 57-residue protein sequence, read N- to C-terminus: MAVPKRRTSKTRKNKRRTHFKISVPGMTECPNCGEYKLSHRVCKNCGSYNGEEVAAK.

This sequence belongs to the bacterial ribosomal protein bL32 family.

The protein is Large ribosomal subunit protein bL32 of Staphylococcus aureus (strain MSSA476).